The sequence spans 295 residues: Cyclic dipyrimidine nucleotide synthase CdnE (295 aa).

A disordered region spans residues 1 to 28 (MAKYTEDQLTSWTKPPSDSEQTKLENSE). Polar residues predominate over residues 7–19 (DQLTSWTKPPSDS). Positions 51 and 53 each coordinate UTP. Position 67 (Asp67) interacts with Mg(2+). Lys123, Asn169, Arg197, Phe217, and Lys276 together coordinate UTP. The Pyrimidine specificity motif (R/Q)xW in donor pocket motif lies at 275-277 (RKW).

This sequence belongs to the CD-NTase family. E02 subfamily. Monomer. The cofactor is Mg(2+).

It catalyses the reaction 2 UTP = c-di-UMP + 2 diphosphate. The enzyme catalyses UTP + CTP = cyclic CMP-UMP + 2 diphosphate. Functionally, cyclic nucleotide synthase (second messenger synthase) of a CBASS antivirus system. CBASS (cyclic oligonucleotide-based antiphage signaling system) provides immunity against bacteriophage. The CD-NTase protein synthesizes cyclic nucleotides in response to infection; these serve as specific second messenger signals. The signals activate a diverse range of effectors, leading to bacterial cell death and thus abortive phage infection. A type I-B(UU) CBASS system. The sequence is that of Cyclic dipyrimidine nucleotide synthase CdnE from Cecembia lonarensis (strain CCUG 58316 / KCTC 22772 / LW9).